A 271-amino-acid polypeptide reads, in one-letter code: Mannosyl-3-phosphoglycerate phosphatase (271 aa).

Aspartate 13 functions as the Nucleophile in the catalytic mechanism. 3 residues coordinate Mg(2+): aspartate 13, aspartate 15, and aspartate 214.

The protein belongs to the HAD-like hydrolase superfamily. MPGP family. The cofactor is Mg(2+).

It localises to the cytoplasm. It catalyses the reaction 2-O-(alpha-D-mannosyl)-3-phosphoglycerate + H2O = (2R)-2-O-(alpha-D-mannosyl)-glycerate + phosphate. This is Mannosyl-3-phosphoglycerate phosphatase from Escherichia coli (strain SMS-3-5 / SECEC).